Here is a 256-residue protein sequence, read N- to C-terminus: MRAYRDQHFLTDPRIVARIADILDISGRIVLEIGPGEGILTEALLERGARVISVELDRTLIERLSRRFASEIADGSLTLLQGDAVKVPLPPFEIVMANLPYSISSPITFRLLDIGFEAAILMYQKEFADRMMAHPGTRDCGRLSIMLQTYARANRCFDLPPGAFSPPPAVRSTVMWIEPREPLFPIHDRKIYEDLVRELFTRRRKTVQSTLKALAGMFGKEKIDSVVRDLNPEILSSRPEALYLEDFATISNQLSS.

The S-adenosyl-L-methionine site is built by His8, Leu10, Gly34, Glu55, Asp83, and Asn98.

It belongs to the class I-like SAM-binding methyltransferase superfamily. rRNA adenine N(6)-methyltransferase family. RsmA subfamily.

Its subcellular location is the cytoplasm. Specifically dimethylates two adjacent adenosines in the loop of a conserved hairpin near the 3'-end of 16S rRNA in the 30S particle. May play a critical role in biogenesis of 30S subunits. In Methanospirillum hungatei JF-1 (strain ATCC 27890 / DSM 864 / NBRC 100397 / JF-1), this protein is Probable ribosomal RNA small subunit methyltransferase A.